Here is a 229-residue protein sequence, read N- to C-terminus: Platelet-activating factor acetylhydrolase IB subunit alpha2 (229 aa).

Active-site residues include S48, D193, and H196.

This sequence belongs to the 'GDSL' lipolytic enzyme family. Platelet-activating factor acetylhydrolase IB beta/gamma subunits subfamily. As to quaternary structure, forms a catalytic dimer which is either homodimer (alpha2/alpha2 homodimer) or heterodimer with PAFAH1B3 (alpha2/alpha1 heterodimer). Component of the cytosolic (PAF-AH (I)) heterotetrameric enzyme, which is composed of PAFAH1B1 (beta), PAFAH1B2 (alpha2) and PAFAH1B3 (alpha1) subunits. The catalytic activity of the enzyme resides in the alpha1 (PAFAH1B3) and alpha2 (PAFAH1B2) subunits, whereas the beta subunit (PAFAH1B1) has regulatory activity. Trimer formation is not essential for the catalytic activity.

The protein resides in the cytoplasm. It carries out the reaction a 1-O-alkyl-2-acetyl-sn-glycero-3-phosphocholine + H2O = a 1-O-alkyl-sn-glycero-3-phosphocholine + acetate + H(+). It catalyses the reaction 1-O-hexadecyl-2-acetyl-sn-glycero-3-phosphocholine + H2O = 1-O-hexadecyl-sn-glycero-3-phosphocholine + acetate + H(+). The catalysed reaction is 1-O-hexadecyl-2-acetyl-sn-glycero-3-phosphate + H2O = 1-O-hexadecyl-sn-glycero-3-phosphate + acetate + H(+). The enzyme catalyses 1-O-hexadecyl-2-acetyl-sn-glycero-3-phosphoethanolamine + H2O = 1-O-hexadecyl-sn-glycero-3-phosphoethanolamine + acetate + H(+). Alpha2 catalytic subunit of the cytosolic type I platelet-activating factor (PAF) acetylhydrolase (PAF-AH (I)) heterotetrameric enzyme that catalyzes the hydrolyze of the acetyl group at the sn-2 position of PAF and its analogs and modulates the action of PAF. This Gallus gallus (Chicken) protein is Platelet-activating factor acetylhydrolase IB subunit alpha2 (PAFAH1B2).